Consider the following 66-residue polypeptide: Large ribosomal subunit protein bL35 (66 aa).

Positions 22-41 (VMSAQRGKRHGMIKRTKKQI) are disordered. Over residues 27–41 (RGKRHGMIKRTKKQI) the composition is skewed to basic residues.

Belongs to the bacterial ribosomal protein bL35 family.

The sequence is that of Large ribosomal subunit protein bL35 from Rhodopseudomonas palustris (strain TIE-1).